The sequence spans 411 residues: Carbohydrate sulfotransferase 1 (411 aa).

Residues 1-2 lie on the Cytoplasmic side of the membrane; the sequence is MQ. The chain crosses the membrane as a helical; Signal-anchor for type II membrane protein span at residues 3–23; sequence CSWKAVLLLALASIAIQYTAI. At 24 to 411 the chain is on the lumenal side; the sequence is RTFTAKSFHT…VEERDFRPFS (388 aa). N-linked (GlcNAc...) asparagine glycosylation is present at asparagine 56. Residue 69–75 participates in 3'-phosphoadenylyl sulfate binding; that stretch reads TRSGSSF. 2 N-linked (GlcNAc...) asparagine glycosylation sites follow: asparagine 145 and asparagine 189. 234–242 is a binding site for 3'-phosphoadenylyl sulfate; sequence RDPRGILAS. Asparagine 334 is a glycosylation site (N-linked (GlcNAc...) asparagine). The short motif at 337–339 is the Cell attachment site element; sequence RGD.

This sequence belongs to the sulfotransferase 1 family. Gal/GlcNAc/GalNAc subfamily. Widely expressed at low level. Expressed in brain and skeletal muscle. Expressed by high endothelial cells (HEVs) and leukocytes.

The protein localises to the golgi apparatus membrane. The enzyme catalyses 3'-phosphoadenylyl sulfate + keratan = adenosine 3',5'-bisphosphate + keratan 6'-sulfate.. Its pathway is glycan metabolism. Functionally, sulfotransferase that utilizes 3'-phospho-5'-adenylyl sulfate (PAPS) as sulfonate donor to catalyze the transfer of sulfate to position 6 of internal galactose (Gal) residues of keratan. Cooperates with B4GALT4 and B3GNT7 glycosyltransferases and CHST6 sulfotransferase to construct and elongate disulfated disaccharide unit [-&gt;3(6-sulfoGalbeta)1-&gt;4(6-sulfoGlcNAcbeta)1-&gt;] within keratan sulfate polymer. Has a preference for sulfating keratan sulfate, but it also transfers sulfate to the unsulfated polymer. Involved in biosynthesis of phosphacan, a major keratan sulfate proteoglycan in the developing brain. Involved in biosynthesis of 6-sulfoGalbeta-containing O-linked glycans in high endothelial venules of lymph nodes. May act in a synergistic manner with CHST4 to generate sialyl 6',6-disulfo Lewis X motif, a recognition determinant for immune cell receptors implicated in leukocyte trafficking. Catalyzes sulfation of N-acetyllactosamine (LacNAc) oligosaccharides with highest efficiency for sialylated LacNAc structures. The polypeptide is Carbohydrate sulfotransferase 1 (Homo sapiens (Human)).